The following is a 317-amino-acid chain: tRNA pseudouridine synthase B (317 aa).

Asp-47 serves as the catalytic Nucleophile.

The protein belongs to the pseudouridine synthase TruB family. Type 1 subfamily.

It catalyses the reaction uridine(55) in tRNA = pseudouridine(55) in tRNA. Responsible for synthesis of pseudouridine from uracil-55 in the psi GC loop of transfer RNAs. This chain is tRNA pseudouridine synthase B, found in Shewanella frigidimarina (strain NCIMB 400).